The following is a 393-amino-acid chain: Putative bacilysin exporter BacE (393 aa).

Helical transmembrane passes span 11–31 (LLFGQALSFMGDYCVLPALLI), 43–63 (SGVIAVRSIPMVFQPFLGVLV), 69–89 (VKIMLWTDVIRGVIFLGLTFL), 92–112 (GEYPLLFLALLFVSYGSGVFF), 133–155 (LFAKATTISIIVGAAAGGLFLLG), 160–177 (LAVAFNGVTYLVSAFFIS), 215–235 (MFTMITMALLWGVVYSYFPIV), 244–264 (IGNFLLTFCIGFGGFIGAALV), 287–307 (ALFLFTPIFAVSVIAAILFFI), and 353–373 (IVDAAVIMAFIVLLVSGLFLH).

This sequence belongs to the major facilitator superfamily.

The protein resides in the cell membrane. Part of the bacilysin biosynthesis operon. May be involved in self-resistance to bacilysin by permitting efflux of this antibiotic. The chain is Putative bacilysin exporter BacE (bacE) from Bacillus amyloliquefaciens (Bacillus velezensis).